The primary structure comprises 157 residues: S-ribosylhomocysteine lyase (157 aa).

Fe cation contacts are provided by His-53, His-57, and Cys-124.

This sequence belongs to the LuxS family. Homodimer. Requires Fe cation as cofactor.

It carries out the reaction S-(5-deoxy-D-ribos-5-yl)-L-homocysteine = (S)-4,5-dihydroxypentane-2,3-dione + L-homocysteine. Functionally, involved in the synthesis of autoinducer 2 (AI-2) which is secreted by bacteria and is used to communicate both the cell density and the metabolic potential of the environment. The regulation of gene expression in response to changes in cell density is called quorum sensing. Catalyzes the transformation of S-ribosylhomocysteine (RHC) to homocysteine (HC) and 4,5-dihydroxy-2,3-pentadione (DPD). The polypeptide is S-ribosylhomocysteine lyase (Borreliella afzelii (strain PKo) (Borrelia afzelii)).